The following is a 322-amino-acid chain: Malate dehydrogenase (322 aa).

NAD(+) contacts are provided by residues 10 to 15 (GSGQIG) and Asp34. Residues Arg83 and Arg89 each contribute to the substrate site. Residues Asn96 and 119-121 (ITN) each bind NAD(+). Substrate contacts are provided by Asn121 and Arg152. The Proton acceptor role is filled by His176.

The protein belongs to the LDH/MDH superfamily. MDH type 3 family.

It catalyses the reaction (S)-malate + NAD(+) = oxaloacetate + NADH + H(+). In terms of biological role, catalyzes the reversible oxidation of malate to oxaloacetate. In Rhodopseudomonas palustris (strain HaA2), this protein is Malate dehydrogenase.